A 211-amino-acid chain; its full sequence is uncharacterized protein (211 aa).

The tract at residues 187–211 is disordered; it reads LKVSEQENSEAPVSEPKEDEKTKKD. The span at 201–211 shows a compositional bias: basic and acidic residues; that stretch reads EPKEDEKTKKD.

This is an uncharacterized protein from Spiroplasma citri.